Here is a 446-residue protein sequence, read N- to C-terminus: Adenylosuccinate synthetase (446 aa).

GTP is bound by residues 20 to 26 (GDEGKGK) and 48 to 50 (GHT). Aspartate 21 (proton acceptor) is an active-site residue. Mg(2+) contacts are provided by aspartate 21 and glycine 48. IMP is bound by residues 21-24 (DEGK), 46-49 (NAGH), threonine 137, arginine 151, glutamine 232, threonine 247, and arginine 319. The active-site Proton donor is the histidine 49. 315 to 321 (SVTGRPR) lines the substrate pocket. GTP contacts are provided by residues arginine 321, 347–349 (KLD), and 429–431 (STG).

The protein belongs to the adenylosuccinate synthetase family. Homodimer. Mg(2+) serves as cofactor.

The protein resides in the cytoplasm. The enzyme catalyses IMP + L-aspartate + GTP = N(6)-(1,2-dicarboxyethyl)-AMP + GDP + phosphate + 2 H(+). It participates in purine metabolism; AMP biosynthesis via de novo pathway; AMP from IMP: step 1/2. Functionally, plays an important role in the de novo pathway of purine nucleotide biosynthesis. Catalyzes the first committed step in the biosynthesis of AMP from IMP. This is Adenylosuccinate synthetase from Ralstonia nicotianae (strain ATCC BAA-1114 / GMI1000) (Ralstonia solanacearum).